We begin with the raw amino-acid sequence, 664 residues long: Transmembrane protein 201 (664 aa).

N-acetylmethionine is present on M1. Topologically, residues 1 to 214 (MEGVSALLAS…SSSAVKAPFQ (214 aa)) are nuclear. The helical transmembrane segment at 215–235 (VILLRALAFLACAFLLFTTLY) threads the bilayer. Over 236–297 (GPSEPFTPGA…EAWAFGQSHQ (62 aa)) the chain is Perinuclear space. A compositionally biased stretch (low complexity) spans 245–261 (AALPPALPPGGNSSAAS). The interval 245–264 (AALPPALPPGGNSSAASDNT) is disordered. Residues 298-318 (TSIVAVGLLTCLLAMLLAGRI) traverse the membrane as a helical segment. Residues 319–322 (RLRR) are Nuclear-facing. The chain crosses the membrane as a helical span at residues 323 to 343 (IDAFSTCLWALLLGLHLAEHY). The Perinuclear space portion of the chain corresponds to 344–356 (LQAASPGWLDTLK). The chain crosses the membrane as a helical span at residues 357-374 (FSTTSLCCLVGFTAAVAT). Residues 375–642 (RKSTGPRRFR…ARVSPSLVRG (268 aa)) lie on the Nuclear side of the membrane. Phosphoserine occurs at positions 441, 444, 450, 454, 466, 477, and 480. The disordered stretch occupies residues 502–522 (PLPSPAPSVASSVASSSGSLR). Residues 508-520 (PSVASSVASSSGS) are compositionally biased toward low complexity. Position 529 is a phosphoserine (S529). The tract at residues 544–629 (SSPGEAPNTP…TTKGCSEETT (86 aa)) is disordered. 2 stretches are compositionally biased toward basic and acidic residues: residues 578 to 587 (HTRDTKHTME) and 595 to 608 (DSAR…KEDE). Over residues 610–628 (SQSSTCVVDTTTKGCSEET) the composition is skewed to polar residues. Residues 643–663 (LLAVSLAVNALFTSAYLYQSL) form a helical membrane-spanning segment. Residue R664 is a topological domain, perinuclear space.

The protein belongs to the TMEM201 family. As to quaternary structure, isoform 2 interacts with EMD. Isoform 3 interacts with SUN2 and LMNA. May bind to Ran GTPase; has a greater affinity for Ran-GTP over Ran-GDP.

The protein resides in the nucleus inner membrane. Functionally, critical regulator of angiogenesis and endothelial cell (EC) migration. Promotes the migration of endothelial cells, which is essential for angiogenesis. Interacts with the linker of nucleoskeleton and cytoskeleton (LINC) complex, which plays a vital role in connecting the cell's cytoskeleton to the nuclear envelope. This interaction is essential for maintaining cellular structure and facilitating the movement of endothelial cells, which is critical for proper vascular development. Involved in nuclear movement during fibroblast polarization and migration. May recruit Ran GTPase to the nuclear periphery. In terms of biological role, may define a distinct membrane domain in the vicinity of the mitotic spindle. Involved in the organization of the nuclear envelope implicating EMD, SUN1 and A-type lamina. Its function is as follows. Proposed to be involved in actin-dependent nuclear movement; via SUN2 associates with transmembrane actin-associated nuclear (TAN) lines which are bound to F-actin cables and couple the nucleus to retrograde actin flow. This chain is Transmembrane protein 201 (Tmem201), found in Mus musculus (Mouse).